The sequence spans 457 residues: UDP-N-acetylmuramoyl-tripeptide--D-alanyl-D-alanine ligase (457 aa).

Position 109 to 115 (109 to 115 (GSSGKTT)) interacts with ATP.

The protein belongs to the MurCDEF family. MurF subfamily.

Its subcellular location is the cytoplasm. The catalysed reaction is D-alanyl-D-alanine + UDP-N-acetyl-alpha-D-muramoyl-L-alanyl-gamma-D-glutamyl-meso-2,6-diaminopimelate + ATP = UDP-N-acetyl-alpha-D-muramoyl-L-alanyl-gamma-D-glutamyl-meso-2,6-diaminopimeloyl-D-alanyl-D-alanine + ADP + phosphate + H(+). It functions in the pathway cell wall biogenesis; peptidoglycan biosynthesis. Functionally, involved in cell wall formation. Catalyzes the final step in the synthesis of UDP-N-acetylmuramoyl-pentapeptide, the precursor of murein. The chain is UDP-N-acetylmuramoyl-tripeptide--D-alanyl-D-alanine ligase from Haemophilus influenzae (strain ATCC 51907 / DSM 11121 / KW20 / Rd).